The following is a 513-amino-acid chain: GMP synthase [glutamine-hydrolyzing] (513 aa).

Residues 8-198 (MILVLDFGSQ…VFGVCECEGE (191 aa)) enclose the Glutamine amidotransferase type-1 domain. The Nucleophile role is filled by C85. Residues H172 and E174 contribute to the active site. The 190-residue stretch at 199 to 388 (WSMENFIEIE…LGIPDEIVWR (190 aa)) folds into the GMPS ATP-PPase domain. 227–233 (GGVDSSV) contributes to the ATP binding site.

Homodimer.

It catalyses the reaction XMP + L-glutamine + ATP + H2O = GMP + L-glutamate + AMP + diphosphate + 2 H(+). The protein operates within purine metabolism; GMP biosynthesis; GMP from XMP (L-Gln route): step 1/1. Its function is as follows. Catalyzes the synthesis of GMP from XMP. The sequence is that of GMP synthase [glutamine-hydrolyzing] (guaA) from Bacillus subtilis (strain 168).